The sequence spans 428 residues: GTPase Obg (428 aa).

In terms of domain architecture, Obg spans 1 to 158 (MFVDQTKIDV…RTLRLELKVL (158 aa)). Residues 159 to 328 (ADVGLVGFPS…LMGKTADLVE (170 aa)) enclose the OBG-type G domain. Residues 165–172 (GFPSVGKS), 190–194 (FTTLT), 212–215 (DLPG), 282–285 (TQMD), and 309–311 (SSV) contribute to the GTP site. Residues S172 and T192 each coordinate Mg(2+). An OCT domain is found at 350 to 428 (YKKPEDEGFK…IADFTFEFVD (79 aa)).

This sequence belongs to the TRAFAC class OBG-HflX-like GTPase superfamily. OBG GTPase family. In terms of assembly, monomer. Mg(2+) is required as a cofactor.

The protein resides in the cytoplasm. An essential GTPase which binds GTP, GDP and possibly (p)ppGpp with moderate affinity, with high nucleotide exchange rates and a fairly low GTP hydrolysis rate. Plays a role in control of the cell cycle, stress response, ribosome biogenesis and in those bacteria that undergo differentiation, in morphogenesis control. This chain is GTPase Obg, found in Lactobacillus johnsonii (strain CNCM I-12250 / La1 / NCC 533).